The chain runs to 350 residues: Dihydroorotase (350 aa).

Residues His-17 and His-19 each contribute to the Zn(2+) site. Residues 19-21 (HLR) and Asn-45 each bind substrate. 3 residues coordinate Zn(2+): Lys-103, His-140, and His-178. Lys-103 is modified (N6-carboxylysine). A substrate-binding site is contributed by His-140. Leu-224 serves as a coordination point for substrate. Asp-252 is a Zn(2+) binding site. Residue Asp-252 is part of the active site. Substrate is bound by residues His-256 and Ala-268.

Belongs to the metallo-dependent hydrolases superfamily. DHOase family. Class II DHOase subfamily. In terms of assembly, homodimer. Zn(2+) serves as cofactor.

It catalyses the reaction (S)-dihydroorotate + H2O = N-carbamoyl-L-aspartate + H(+). It functions in the pathway pyrimidine metabolism; UMP biosynthesis via de novo pathway; (S)-dihydroorotate from bicarbonate: step 3/3. Catalyzes the reversible cyclization of carbamoyl aspartate to dihydroorotate. This Buchnera aphidicola subsp. Acyrthosiphon pisum (strain 5A) protein is Dihydroorotase.